The following is a 632-amino-acid chain: tRNA uridine 5-carboxymethylaminomethyl modification enzyme MnmG (632 aa).

FAD is bound by residues 15-20 (GAGHAG), V127, and S182. The disordered stretch occupies residues 203 to 226 (TPPRVKSSTIDYSKTEEQPGDDHP). The segment covering 215–226 (SKTEEQPGDDHP) has biased composition (basic and acidic residues). NAD(+) is bound at residue 274-288 (GARYCPSIEDKIVRF). Residue Q371 participates in FAD binding.

This sequence belongs to the MnmG family. Homodimer. Heterotetramer of two MnmE and two MnmG subunits. Requires FAD as cofactor.

The protein localises to the cytoplasm. Functionally, NAD-binding protein involved in the addition of a carboxymethylaminomethyl (cmnm) group at the wobble position (U34) of certain tRNAs, forming tRNA-cmnm(5)s(2)U34. The sequence is that of tRNA uridine 5-carboxymethylaminomethyl modification enzyme MnmG from Listeria monocytogenes serotype 4b (strain F2365).